A 210-amino-acid chain; its full sequence is MATDSTQCVKKSRGRPKVFDRDAALDKAMKLFWQHGYEATSLADLVEATGAKAPTLYAEFTNKEGLFRAVLDRYIDRFAAKHEAQLFCEEKSVESALADYFAAIANCFTSKDTPAGCFMINNCTTLSPDSGDIANTLKSRHAMQERTLQQFLCQRQARGEIPPHCDVTHLAEFLNCIIQGMSISAREGASLEKLMQIAGTTLRLWPELVK.

Residues 18 to 78 (VFDRDAALDK…AVLDRYIDRF (61 aa)) form the HTH tetR-type domain. Residues 41 to 60 (SLADLVEATGAKAPTLYAEF) constitute a DNA-binding region (H-T-H motif).

Its activity is regulated as follows. Binding to the promoter region of BhsA/ComC is released in the presence of copper. In terms of biological role, represses expression of BhsA/ComC by binding to its promoter region in the absence of copper. The polypeptide is HTH-type transcriptional repressor ComR (comR) (Escherichia coli (strain K12)).